Here is a 474-residue protein sequence, read N- to C-terminus: MTKKLHIKTWGCQMNEYDSSKMADLLNSTHGYTLTEQAEDADVLLLNTCSIREKAQEKVFALLGRWKKLKESNPDMIIGVGGCVASQEGAQIRQRASCVDIVFGPQTLHRLPEMINSVRGTRSPVVDVSFPEIEKFDRMPEPRADGPTAFVSIMEGCNKYCTFCVVPYTRGEEVSRPSDDILFEVAQLAAQGVREVNLLGQNVNAYRGETFDGGICSFAELLRLVAAIDGIDRIRFTTSHPIEFNDDIIDVYRDTPELVSFLHLPVQSGADRILTLMKRAHTALEYKAIIRKLLAARPNIQISSDFIIGFPGETQADFEQTMKLIGEINFDISYSFIYSARPGTPAADLPDDVSEDEKKQRLYILQDRINQQTTAWSRRKLGTVQRILVEGTSRKNVMELSGRTECNRVVNFEGSPEHIGKFVDVEITDVYANSLRGMLLRGEHQMALRTLETPASVIERTRKENELGVATWLP.

An MTTase N-terminal domain is found at 3–120 (KKLHIKTWGC…LPEMINSVRG (118 aa)). Residues Cys-12, Cys-49, Cys-83, Cys-157, Cys-161, and Cys-164 each coordinate [4Fe-4S] cluster. One can recognise a Radical SAM core domain in the interval 143–375 (RADGPTAFVS…QDRINQQTTA (233 aa)). Positions 378 to 441 (RRKLGTVQRI…ANSLRGMLLR (64 aa)) constitute a TRAM domain.

It belongs to the methylthiotransferase family. MiaB subfamily. As to quaternary structure, monomer. [4Fe-4S] cluster serves as cofactor.

The protein localises to the cytoplasm. The enzyme catalyses N(6)-dimethylallyladenosine(37) in tRNA + (sulfur carrier)-SH + AH2 + 2 S-adenosyl-L-methionine = 2-methylsulfanyl-N(6)-dimethylallyladenosine(37) in tRNA + (sulfur carrier)-H + 5'-deoxyadenosine + L-methionine + A + S-adenosyl-L-homocysteine + 2 H(+). Functionally, catalyzes the methylthiolation of N6-(dimethylallyl)adenosine (i(6)A), leading to the formation of 2-methylthio-N6-(dimethylallyl)adenosine (ms(2)i(6)A) at position 37 in tRNAs that read codons beginning with uridine. The protein is tRNA-2-methylthio-N(6)-dimethylallyladenosine synthase of Erwinia tasmaniensis (strain DSM 17950 / CFBP 7177 / CIP 109463 / NCPPB 4357 / Et1/99).